Here is a 328-residue protein sequence, read N- to C-terminus: Nicotianamine synthase 1 (328 aa).

The protein belongs to the nicotianamine synthase (NAS)-like family. In roots but not in leaves.

The enzyme catalyses 3 S-adenosyl-L-methionine = nicotianamine + 3 S-methyl-5'-thioadenosine + 3 H(+). In terms of biological role, synthesizes nicotianamine, a polyamine that is the first intermediate in the synthesis of the phytosiderophores of the mugineic acid type found in gramineae which serves as a sensor for the physiological iron status within the plant, and/or might be involved in the transport of iron. The sequence is that of Nicotianamine synthase 1 (NAS1) from Hordeum vulgare (Barley).